A 536-amino-acid chain; its full sequence is CUGBP Elav-like family member 2 (536 aa).

RRM domains follow at residues isoleucine 58–serine 141, arginine 150–threonine 230, and alanine 451–serine 529.

This sequence belongs to the CELF/BRUNOL family.

Its subcellular location is the nucleus. The protein localises to the cytoplasm. Functionally, RNA-binding protein implicated in the regulation of several post-transcriptional events. May be involved in pre-mRNA alternative splicing, mRNA translation repression and stability. The chain is CUGBP Elav-like family member 2 (celf2) from Xenopus laevis (African clawed frog).